The following is a 325-amino-acid chain: tRNA-dihydrouridine(16) synthase (325 aa).

FMN is bound by residues 12 to 14 (PMQ) and Gln-73. Catalysis depends on Cys-103, which acts as the Proton donor. Residues Lys-144, 205-207 (NGE), and 229-230 (GR) each bind FMN.

This sequence belongs to the Dus family. DusC subfamily. FMN serves as cofactor.

It catalyses the reaction 5,6-dihydrouridine(16) in tRNA + NADP(+) = uridine(16) in tRNA + NADPH + H(+). The enzyme catalyses 5,6-dihydrouridine(16) in tRNA + NAD(+) = uridine(16) in tRNA + NADH + H(+). Catalyzes the synthesis of 5,6-dihydrouridine (D), a modified base found in the D-loop of most tRNAs, via the reduction of the C5-C6 double bond in target uridines. Specifically modifies U16 in tRNAs. The protein is tRNA-dihydrouridine(16) synthase of Haemophilus ducreyi (strain 35000HP / ATCC 700724).